We begin with the raw amino-acid sequence, 236 residues long: tRNA (guanine-N(1)-)-methyltransferase (236 aa).

S-adenosyl-L-methionine-binding positions include G110 and 129–134 (LGDFVL).

This sequence belongs to the RNA methyltransferase TrmD family. As to quaternary structure, homodimer.

It localises to the cytoplasm. The catalysed reaction is guanosine(37) in tRNA + S-adenosyl-L-methionine = N(1)-methylguanosine(37) in tRNA + S-adenosyl-L-homocysteine + H(+). Functionally, specifically methylates guanosine-37 in various tRNAs. This is tRNA (guanine-N(1)-)-methyltransferase from Clostridium perfringens (strain SM101 / Type A).